The primary structure comprises 137 residues: Proofreading thioesterase EntH (137 aa).

The active-site Nucleophile or proton acceptor is Glu63.

Belongs to the thioesterase PaaI family. Homotetramer. Dimer of dimers. Interacts specifically with the aryl carrier protein (ArCP) domain of EntB.

It is found in the cytoplasm. It functions in the pathway siderophore biosynthesis; enterobactin biosynthesis. Functionally, required for optimal enterobactin synthesis. Acts as a proofreading enzyme that prevents EntB misacylation by hydrolyzing the thioester bound existing between EntB and wrongly charged molecules. This chain is Proofreading thioesterase EntH, found in Salmonella typhimurium (strain LT2 / SGSC1412 / ATCC 700720).